A 525-amino-acid polypeptide reads, in one-letter code: Probable CoA ligase CCL9 (525 aa).

Residues 171–179, 311–316, Asp395, 407–410, and Lys501 each bind ATP; these read TSGTTSRPK, EAYAMT, and LVGR. An SBD1 region spans residues 242–311; sequence SASTFWSDMI…EESFGAPVLE (70 aa). The interval 312-375 is SBD2; the sequence is AYAMTEAAHL…IRGPNVTKGY (64 aa).

This sequence belongs to the ATP-dependent AMP-binding enzyme family.

The protein resides in the cytoplasm. Its subcellular location is the cytosol. This is Probable CoA ligase CCL9 from Humulus lupulus (European hop).